The chain runs to 471 residues: Lincomycin resistance protein LmrB (471 aa).

13 helical membrane-spanning segments follow: residues 15–34, 55–77, 82–104, 111–131, 141–163, 170–187, 202–224, 231–253, 268–290, 297–319, 329–351, 358–380, and 445–467; these read PIIA…ETAL, LTTG…LQWF, LFFT…PTFA, VVQA…ILLI, MGMI…GLIL, WIFW…LFGM, DILS…SSAG, ATVL…RQLT, MFTL…MILL, SLAL…NGLM, AYGP…FFLT, SALT…MMPA, and GIQN…SLFI.

Belongs to the major facilitator superfamily. EmrB family.

The protein resides in the cell membrane. Proton-dependent transporter. May mediate the efflux of lincomycin. This Listeria innocua serovar 6a (strain ATCC BAA-680 / CLIP 11262) protein is Lincomycin resistance protein LmrB (lmrB).